A 337-amino-acid polypeptide reads, in one-letter code: Ornithine carbamoyltransferase (337 aa).

Residues 56 to 59, Gln-83, Arg-107, and 134 to 137 each bind carbamoyl phosphate; these read STRT and HPTQ. Residues Asn-168, Asp-232, and 236–237 each bind L-ornithine; that span reads SM. Residues 274 to 275 and Arg-320 each bind carbamoyl phosphate; that span reads CL.

It belongs to the aspartate/ornithine carbamoyltransferase superfamily. OTCase family.

Its subcellular location is the cytoplasm. It catalyses the reaction carbamoyl phosphate + L-ornithine = L-citrulline + phosphate + H(+). Its pathway is amino-acid biosynthesis; L-arginine biosynthesis; L-arginine from L-ornithine and carbamoyl phosphate: step 1/3. In terms of biological role, reversibly catalyzes the transfer of the carbamoyl group from carbamoyl phosphate (CP) to the N(epsilon) atom of ornithine (ORN) to produce L-citrulline. In Shigella flexneri serotype 5b (strain 8401), this protein is Ornithine carbamoyltransferase.